We begin with the raw amino-acid sequence, 426 residues long: Serine hydroxymethyltransferase (426 aa).

(6S)-5,6,7,8-tetrahydrofolate is bound by residues Leu-118 and 122-124 (GHL). Position 227 is an N6-(pyridoxal phosphate)lysine (Lys-227). Positions 342 to 368 (NTIPNDPKPPTQASGIRLGTPAMTTRG) are disordered.

Belongs to the SHMT family. As to quaternary structure, homodimer. Pyridoxal 5'-phosphate serves as cofactor.

It is found in the cytoplasm. It carries out the reaction (6R)-5,10-methylene-5,6,7,8-tetrahydrofolate + glycine + H2O = (6S)-5,6,7,8-tetrahydrofolate + L-serine. It participates in one-carbon metabolism; tetrahydrofolate interconversion. Its pathway is amino-acid biosynthesis; glycine biosynthesis; glycine from L-serine: step 1/1. Its function is as follows. Catalyzes the reversible interconversion of serine and glycine with tetrahydrofolate (THF) serving as the one-carbon carrier. This reaction serves as the major source of one-carbon groups required for the biosynthesis of purines, thymidylate, methionine, and other important biomolecules. Also exhibits THF-independent aldolase activity toward beta-hydroxyamino acids, producing glycine and aldehydes, via a retro-aldol mechanism. The polypeptide is Serine hydroxymethyltransferase (Thermomicrobium roseum (strain ATCC 27502 / DSM 5159 / P-2)).